A 135-amino-acid chain; its full sequence is DNA-binding protein H-NS homolog (135 aa).

The DNA-binding element occupies 112 to 117 (QGRTPS).

It belongs to the histone-like protein H-NS family. As to quaternary structure, homodimer that oligomerizes on DNA into higher-order complexes that form bridges between disparate regions of DNA compacting it.

It is found in the cytoplasm. The protein localises to the nucleoid. In terms of biological role, a DNA-binding protein implicated in transcriptional repression and chromosome organization and compaction. Binds nucleation sites in AT-rich DNA and bridges them, forming higher-order nucleoprotein complexes and condensing the chromosome. A subset of genes are repressed by H-NS in association with other proteins. This Buchnera aphidicola subsp. Acyrthosiphon pisum (strain APS) (Acyrthosiphon pisum symbiotic bacterium) protein is DNA-binding protein H-NS homolog (hns).